Consider the following 190-residue polypeptide: Xanthine phosphoribosyltransferase (190 aa).

Residues Leu-20 and Asn-27 each contribute to the xanthine site. 5-phospho-alpha-D-ribose 1-diphosphate is bound at residue 128–132; that stretch reads ANGEA. Lys-156 provides a ligand contact to xanthine.

The protein belongs to the purine/pyrimidine phosphoribosyltransferase family. Xpt subfamily. In terms of assembly, homodimer.

The protein localises to the cytoplasm. The enzyme catalyses XMP + diphosphate = xanthine + 5-phospho-alpha-D-ribose 1-diphosphate. Its pathway is purine metabolism; XMP biosynthesis via salvage pathway; XMP from xanthine: step 1/1. In terms of biological role, converts the preformed base xanthine, a product of nucleic acid breakdown, to xanthosine 5'-monophosphate (XMP), so it can be reused for RNA or DNA synthesis. This chain is Xanthine phosphoribosyltransferase, found in Clostridium botulinum (strain Eklund 17B / Type B).